A 229-amino-acid chain; its full sequence is uncharacterized protein (229 aa).

One can recognise an S4 RNA-binding domain in the interval 2 to 69 (QRLAKIISNA…KPRLWIYYKP (68 aa)). D102 acts as the Nucleophile in catalysis.

This sequence belongs to the pseudouridine synthase RsuA family.

The catalysed reaction is a uridine in RNA = a pseudouridine in RNA. This is an uncharacterized protein from Rickettsia felis (strain ATCC VR-1525 / URRWXCal2) (Rickettsia azadi).